Reading from the N-terminus, the 281-residue chain is Arylamine N-acetyltransferase / N-hydroxyarylamine O-acetyltransferase (281 aa).

Cys-69 acts as the Acyl-thioester intermediate in catalysis. Active-site residues include His-107 and Asp-122.

The protein belongs to the arylamine N-acetyltransferase family. Monomer and homodimer.

Its subcellular location is the cytoplasm. It catalyses the reaction an arylamine + acetyl-CoA = an N-acetylarylamine + CoA. The catalysed reaction is an N-hydroxyarylamine + acetyl-CoA = an N-acetoxyarylamine + CoA. Inhibited by N-ethylmaleimide and iodoacetamide. In terms of biological role, catalyzes both the acetyl-CoA-dependent N-acetylation of aromatic amines and the O-acetylation of N-hydroxyarylamines. In vitro, catalyzes the O-acetylation of N-hydroxy-Glu-P-1, and the N-acetylation of isoniazid and 2-aminofluorene. This chain is Arylamine N-acetyltransferase / N-hydroxyarylamine O-acetyltransferase (nhoA), found in Salmonella typhimurium (strain LT2 / SGSC1412 / ATCC 700720).